Here is a 364-residue protein sequence, read N- to C-terminus: NADH-quinone oxidoreductase subunit H (364 aa).

8 helical membrane passes run 15–35, 84–104, 123–143, 169–189, 206–226, 257–277, 302–322, and 341–361; these read LLVLGQIGLFTLVLLLSIAFL, AVFILAPILTCTLAFVTWAAI, VGVLYLFAISSLGVYGIIMGG, IGFVIVTVILLVGSMNLTTIV, YFPLIVVMVPMFVIFFISALA, LFMLGEYLNIVLMCAMMTILF, LSGLAWFMGKVLFCFFLFALV, and IFLPTSLAAVIIVAGYVTFVG.

It belongs to the complex I subunit 1 family. NDH-1 is composed of 14 different subunits. Subunits NuoA, H, J, K, L, M, N constitute the membrane sector of the complex.

It localises to the cell inner membrane. It carries out the reaction a quinone + NADH + 5 H(+)(in) = a quinol + NAD(+) + 4 H(+)(out). Its function is as follows. NDH-1 shuttles electrons from NADH, via FMN and iron-sulfur (Fe-S) centers, to quinones in the respiratory chain. The immediate electron acceptor for the enzyme in this species is believed to be ubiquinone. Couples the redox reaction to proton translocation (for every two electrons transferred, four hydrogen ions are translocated across the cytoplasmic membrane), and thus conserves the redox energy in a proton gradient. This subunit may bind ubiquinone. The chain is NADH-quinone oxidoreductase subunit H from Hyphomonas neptunium (strain ATCC 15444).